The following is a 375-amino-acid chain: Peptidyl-prolyl cis-trans isomerase D (375 aa).

One can recognise a PPIase cyclophilin-type domain in the interval 7-169; that stretch reads YFDITIANEP…QAVTISSAGV (163 aa). TPR repeat units follow at residues 217–250, 270–307, and 312–345; these read AGKL…LDVH, LPLL…PNLS, and GKAL…VPGD.

The protein belongs to the cyclophilin-type PPIase family. PPIase D subfamily.

It is found in the cytoplasm. It carries out the reaction [protein]-peptidylproline (omega=180) = [protein]-peptidylproline (omega=0). Functionally, PPIases accelerate the folding of proteins. It catalyzes the cis-trans isomerization of proline imidic peptide bonds in oligopeptides. The chain is Peptidyl-prolyl cis-trans isomerase D (CPR6) from Cryptococcus neoformans var. neoformans serotype D (strain JEC21 / ATCC MYA-565) (Filobasidiella neoformans).